The sequence spans 560 residues: Trans-activating transcriptional regulatory protein (560 aa).

Positions 106 to 133 (DSMKRKASELDSDSDSGESSKGKKRVIK) are disordered.

This sequence belongs to the nucleopolyhedrovirus IE-1 protein family.

Regulatory transcriptional protein, which trans-activates gene expression from early baculovirus promoters. Can also trans-activate its own promoter, suggesting that it is autoregulated during normal infection of insect cells. This Choristoneura fumiferana nuclear polyhedrosis virus (CfMNPV) protein is Trans-activating transcriptional regulatory protein (IE1).